The sequence spans 173 residues: RNA pyrophosphohydrolase (173 aa).

The Nudix hydrolase domain occupies 6–149 (GFRANVGIII…KRDVYRKVMK (144 aa)). Residues 38-59 (GGVDDGETPEEAMYRELYEEVG) carry the Nudix box motif.

This sequence belongs to the Nudix hydrolase family. RppH subfamily. Requires a divalent metal cation as cofactor.

Its function is as follows. Accelerates the degradation of transcripts by removing pyrophosphate from the 5'-end of triphosphorylated RNA, leading to a more labile monophosphorylated state that can stimulate subsequent ribonuclease cleavage. This chain is RNA pyrophosphohydrolase, found in Shewanella woodyi (strain ATCC 51908 / MS32).